A 226-amino-acid chain; its full sequence is Holliday junction branch migration complex subunit RuvA (226 aa).

A domain I region spans residues 1–67; the sequence is MITSVYAKIE…AINKELYAFK (67 aa). Residues 68–145 are domain II; the sequence is SLKEKEWFKA…YLKNQIVVSD (78 aa). Residues 146–167 are flexible linker; the sequence is KVEPQIDDDEKIDDSKDLNDDE. The interval 168–226 is domain III; it reads LLSEIVIEAIDCLISLGYKQEQIKTALAEIDLKNESINDSADLVAVIIKQIGLRTSEVS.

It belongs to the RuvA family. Homotetramer. Forms an RuvA(8)-RuvB(12)-Holliday junction (HJ) complex. HJ DNA is sandwiched between 2 RuvA tetramers; dsDNA enters through RuvA and exits via RuvB. An RuvB hexamer assembles on each DNA strand where it exits the tetramer. Each RuvB hexamer is contacted by two RuvA subunits (via domain III) on 2 adjacent RuvB subunits; this complex drives branch migration. In the full resolvosome a probable DNA-RuvA(4)-RuvB(12)-RuvC(2) complex forms which resolves the HJ.

It localises to the cytoplasm. Functionally, the RuvA-RuvB-RuvC complex processes Holliday junction (HJ) DNA during genetic recombination and DNA repair, while the RuvA-RuvB complex plays an important role in the rescue of blocked DNA replication forks via replication fork reversal (RFR). RuvA specifically binds to HJ cruciform DNA, conferring on it an open structure. The RuvB hexamer acts as an ATP-dependent pump, pulling dsDNA into and through the RuvAB complex. HJ branch migration allows RuvC to scan DNA until it finds its consensus sequence, where it cleaves and resolves the cruciform DNA. The protein is Holliday junction branch migration complex subunit RuvA of Mycoplasmoides gallisepticum (strain R(low / passage 15 / clone 2)) (Mycoplasma gallisepticum).